The chain runs to 338 residues: Phenylalanine--tRNA ligase alpha subunit (338 aa).

Glu-253 serves as a coordination point for Mg(2+).

Belongs to the class-II aminoacyl-tRNA synthetase family. Phe-tRNA synthetase alpha subunit type 1 subfamily. In terms of assembly, tetramer of two alpha and two beta subunits. Mg(2+) serves as cofactor.

It localises to the cytoplasm. It carries out the reaction tRNA(Phe) + L-phenylalanine + ATP = L-phenylalanyl-tRNA(Phe) + AMP + diphosphate + H(+). The chain is Phenylalanine--tRNA ligase alpha subunit from Gloeobacter violaceus (strain ATCC 29082 / PCC 7421).